The primary structure comprises 460 residues: Methionine aminopeptidase 2-1 (460 aa).

Positions 1–90 (MGSKSPNGED…SAQAAQQTAP (90 aa)) are disordered. Residues 30-39 (SAAASGLLRG) are compositionally biased toward low complexity. Positions 42 to 52 (EDQDEDGDDDE) are enriched in acidic residues. The segment covering 69–81 (TKKRRRNNKKKKS) has biased composition (basic residues). Histidine 212 provides a ligand contact to substrate. A divalent metal cation contacts are provided by aspartate 233, aspartate 244, and histidine 313. Residue histidine 321 coordinates substrate. A divalent metal cation contacts are provided by glutamate 346 and glutamate 441.

The protein belongs to the peptidase M24A family. Methionine aminopeptidase eukaryotic type 2 subfamily. Co(2+) serves as cofactor. It depends on Zn(2+) as a cofactor. Mn(2+) is required as a cofactor. The cofactor is Fe(2+).

The protein resides in the cytoplasm. It catalyses the reaction Release of N-terminal amino acids, preferentially methionine, from peptides and arylamides.. Cotranslationally removes the N-terminal methionine from nascent proteins. The N-terminal methionine is often cleaved when the second residue in the primary sequence is small and uncharged (Met-Ala-, Cys, Gly, Pro, Ser, Thr, or Val). This is Methionine aminopeptidase 2-1 from Leptosphaeria maculans (strain JN3 / isolate v23.1.3 / race Av1-4-5-6-7-8) (Blackleg fungus).